A 388-amino-acid chain; its full sequence is Succinate--CoA ligase [ADP-forming] subunit beta (388 aa).

In terms of domain architecture, ATP-grasp spans 9-244 (KEILRKFGVA…LDEEDPAEIE (236 aa)). ATP is bound by residues Lys-46, 53–55 (GRG), Glu-99, Ala-102, and Glu-107. Residues Asn-199 and Asp-213 each contribute to the Mg(2+) site. Substrate is bound by residues Asn-264 and 321–323 (GIM).

It belongs to the succinate/malate CoA ligase beta subunit family. Heterotetramer of two alpha and two beta subunits. Requires Mg(2+) as cofactor.

It carries out the reaction succinate + ATP + CoA = succinyl-CoA + ADP + phosphate. The enzyme catalyses GTP + succinate + CoA = succinyl-CoA + GDP + phosphate. It functions in the pathway carbohydrate metabolism; tricarboxylic acid cycle; succinate from succinyl-CoA (ligase route): step 1/1. Succinyl-CoA synthetase functions in the citric acid cycle (TCA), coupling the hydrolysis of succinyl-CoA to the synthesis of either ATP or GTP and thus represents the only step of substrate-level phosphorylation in the TCA. The beta subunit provides nucleotide specificity of the enzyme and binds the substrate succinate, while the binding sites for coenzyme A and phosphate are found in the alpha subunit. The sequence is that of Succinate--CoA ligase [ADP-forming] subunit beta from Burkholderia mallei (strain NCTC 10247).